Reading from the N-terminus, the 308-residue chain is Protoheme IX farnesyltransferase (308 aa).

8 consecutive transmembrane segments (helical) span residues 31-51 (VIEL…RGTV), 53-73 (PLLI…ANAL), 102-122 (NALV…WWTT), 124-144 (LLSG…YTLL), 149-169 (TSQN…IGWS), 170-190 (AVTG…FFWT), 240-260 (LALA…VWFL), and 288-308 (YLAV…PHLF).

It belongs to the UbiA prenyltransferase family. Protoheme IX farnesyltransferase subfamily.

It is found in the cell membrane. The catalysed reaction is heme b + (2E,6E)-farnesyl diphosphate + H2O = Fe(II)-heme o + diphosphate. It functions in the pathway porphyrin-containing compound metabolism; heme O biosynthesis; heme O from protoheme: step 1/1. Its function is as follows. Converts heme B (protoheme IX) to heme O by substitution of the vinyl group on carbon 2 of heme B porphyrin ring with a hydroxyethyl farnesyl side group. This is Protoheme IX farnesyltransferase from Mycobacterium avium (strain 104).